The following is a 257-amino-acid chain: Pimeloyl-[acyl-carrier protein] methyl ester esterase (257 aa).

The AB hydrolase-1 domain occupies 16 to 240 (LVLIHGWGMN…EQASHAPFIS (225 aa)). Substrate is bound by residues Trp22, 82–83 (SL), and 143–147 (FMALQ). Catalysis depends on Ser82, which acts as the Nucleophile. Residues Asp207 and His235 contribute to the active site. Residue His235 participates in substrate binding.

It belongs to the AB hydrolase superfamily. Carboxylesterase BioH family. Monomer.

Its subcellular location is the cytoplasm. The enzyme catalyses 6-carboxyhexanoyl-[ACP] methyl ester + H2O = 6-carboxyhexanoyl-[ACP] + methanol + H(+). Its pathway is cofactor biosynthesis; biotin biosynthesis. In terms of biological role, the physiological role of BioH is to remove the methyl group introduced by BioC when the pimeloyl moiety is complete. It allows to synthesize pimeloyl-ACP via the fatty acid synthetic pathway through the hydrolysis of the ester bonds of pimeloyl-ACP esters. In Aliivibrio fischeri (strain MJ11) (Vibrio fischeri), this protein is Pimeloyl-[acyl-carrier protein] methyl ester esterase.